Reading from the N-terminus, the 102-residue chain is Small ribosomal subunit protein uS10 (102 aa).

The protein belongs to the universal ribosomal protein uS10 family. Part of the 30S ribosomal subunit.

Its function is as follows. Involved in the binding of tRNA to the ribosomes. This Clostridium botulinum (strain ATCC 19397 / Type A) protein is Small ribosomal subunit protein uS10.